A 528-amino-acid chain; its full sequence is Chaperonin GroEL, chloroplastic (528 aa).

Residues 29–32 (TLGP), 86–90 (DGTTT), glycine 414, and aspartate 496 contribute to the ATP site.

The protein belongs to the chaperonin (HSP60) family. In terms of assembly, forms a cylinder of 14 subunits composed of two heptameric rings stacked back-to-back. Interacts with the co-chaperonin GroES.

The protein localises to the plastid. The protein resides in the chloroplast. The catalysed reaction is ATP + H2O + a folded polypeptide = ADP + phosphate + an unfolded polypeptide.. Together with its co-chaperonin GroES, plays an essential role in assisting protein folding. The GroEL-GroES system forms a nano-cage that allows encapsulation of the non-native substrate proteins and provides a physical environment optimized to promote and accelerate protein folding. The protein is Chaperonin GroEL, chloroplastic of Porphyra purpurea (Red seaweed).